Here is a 93-residue protein sequence, read N- to C-terminus: Pyrimidine/purine nucleoside phosphorylase (93 aa).

Belongs to the nucleoside phosphorylase PpnP family.

It catalyses the reaction a purine D-ribonucleoside + phosphate = a purine nucleobase + alpha-D-ribose 1-phosphate. It carries out the reaction adenosine + phosphate = alpha-D-ribose 1-phosphate + adenine. The catalysed reaction is cytidine + phosphate = cytosine + alpha-D-ribose 1-phosphate. The enzyme catalyses guanosine + phosphate = alpha-D-ribose 1-phosphate + guanine. It catalyses the reaction inosine + phosphate = alpha-D-ribose 1-phosphate + hypoxanthine. It carries out the reaction thymidine + phosphate = 2-deoxy-alpha-D-ribose 1-phosphate + thymine. The catalysed reaction is uridine + phosphate = alpha-D-ribose 1-phosphate + uracil. The enzyme catalyses xanthosine + phosphate = alpha-D-ribose 1-phosphate + xanthine. In terms of biological role, catalyzes the phosphorolysis of diverse nucleosides, yielding D-ribose 1-phosphate and the respective free bases. Can use uridine, adenosine, guanosine, cytidine, thymidine, inosine and xanthosine as substrates. Also catalyzes the reverse reactions. In Vibrio vulnificus (strain CMCP6), this protein is Pyrimidine/purine nucleoside phosphorylase.